The following is a 417-amino-acid chain: Gamma-glutamyl phosphate reductase (417 aa).

The protein belongs to the gamma-glutamyl phosphate reductase family.

It localises to the cytoplasm. The enzyme catalyses L-glutamate 5-semialdehyde + phosphate + NADP(+) = L-glutamyl 5-phosphate + NADPH + H(+). The protein operates within amino-acid biosynthesis; L-proline biosynthesis; L-glutamate 5-semialdehyde from L-glutamate: step 2/2. Its function is as follows. Catalyzes the NADPH-dependent reduction of L-glutamate 5-phosphate into L-glutamate 5-semialdehyde and phosphate. The product spontaneously undergoes cyclization to form 1-pyrroline-5-carboxylate. The chain is Gamma-glutamyl phosphate reductase from Polynucleobacter asymbioticus (strain DSM 18221 / CIP 109841 / QLW-P1DMWA-1) (Polynucleobacter necessarius subsp. asymbioticus).